Consider the following 250-residue polypeptide: Envelope glycoprotein L (250 aa).

Residues 1–18 (MELLLFVMSLILLTFSKA) form the signal peptide. Residues 31–239 (KLDDCIAAVI…ETYNSKLPFR (209 aa)) form the gL betaherpesvirus-type domain. A disulfide bridge links Cys136 with Cys141.

It belongs to the herpesviridae glycoprotein L (gL) family. Betaherpesvirinae gL subfamily. Interacts with glycoprotein H (gH); this interaction is necessary for the correct processing and cell surface expression of gH. Part of a gH-gL-gO complex.

Its subcellular location is the virion membrane. It is found in the host cell membrane. The protein localises to the host Golgi apparatus. The protein resides in the host trans-Golgi network. In terms of biological role, the heterodimer glycoprotein H-glycoprotein L is required for the fusion of viral and plasma membranes leading to virus entry into the host cell. Acts as a functional inhibitor of gH and maintains gH in an inhibited form. Upon binding to host integrins, gL dissociates from gH leading to activation of the viral fusion glycoproteins gB and gH. In Human herpesvirus 6A (strain Uganda-1102) (HHV-6 variant A), this protein is Envelope glycoprotein L.